The primary structure comprises 217 residues: N-(5'-phosphoribosyl)anthranilate isomerase (217 aa).

The protein belongs to the TrpF family.

It carries out the reaction N-(5-phospho-beta-D-ribosyl)anthranilate = 1-(2-carboxyphenylamino)-1-deoxy-D-ribulose 5-phosphate. The protein operates within amino-acid biosynthesis; L-tryptophan biosynthesis; L-tryptophan from chorismate: step 3/5. The sequence is that of N-(5'-phosphoribosyl)anthranilate isomerase from Chlorobium phaeovibrioides (strain DSM 265 / 1930) (Prosthecochloris vibrioformis (strain DSM 265)).